Consider the following 459-residue polypeptide: Methylenetetrahydrofolate--tRNA-(uracil-5-)-methyltransferase TrmFO (459 aa).

FAD is bound at residue 15–20; sequence GAGLAG.

Belongs to the MnmG family. TrmFO subfamily. It depends on FAD as a cofactor.

It is found in the cytoplasm. It catalyses the reaction uridine(54) in tRNA + (6R)-5,10-methylene-5,6,7,8-tetrahydrofolate + NADH + H(+) = 5-methyluridine(54) in tRNA + (6S)-5,6,7,8-tetrahydrofolate + NAD(+). The enzyme catalyses uridine(54) in tRNA + (6R)-5,10-methylene-5,6,7,8-tetrahydrofolate + NADPH + H(+) = 5-methyluridine(54) in tRNA + (6S)-5,6,7,8-tetrahydrofolate + NADP(+). In terms of biological role, catalyzes the folate-dependent formation of 5-methyl-uridine at position 54 (M-5-U54) in all tRNAs. The chain is Methylenetetrahydrofolate--tRNA-(uracil-5-)-methyltransferase TrmFO from Syntrophotalea carbinolica (strain DSM 2380 / NBRC 103641 / GraBd1) (Pelobacter carbinolicus).